Reading from the N-terminus, the 351-residue chain is Dihydroorotate dehydrogenase (quinone) (351 aa).

Residues 67 to 71 and threonine 91 each bind FMN; that span reads AGFDK. Lysine 71 lines the substrate pocket. Position 116 to 120 (116 to 120) interacts with substrate; sequence NAMGF. Asparagine 145 and asparagine 178 together coordinate FMN. Asparagine 178 contributes to the substrate binding site. Residue serine 181 is the Nucleophile of the active site. Asparagine 183 provides a ligand contact to substrate. FMN contacts are provided by lysine 214 and threonine 242. Position 243–244 (243–244) interacts with substrate; it reads NT. Residues glycine 262, glycine 291, and 312–313 each bind FMN; that span reads YS.

Belongs to the dihydroorotate dehydrogenase family. Type 2 subfamily. Monomer. Requires FMN as cofactor.

The protein resides in the cell membrane. It catalyses the reaction (S)-dihydroorotate + a quinone = orotate + a quinol. It functions in the pathway pyrimidine metabolism; UMP biosynthesis via de novo pathway; orotate from (S)-dihydroorotate (quinone route): step 1/1. Catalyzes the conversion of dihydroorotate to orotate with quinone as electron acceptor. This chain is Dihydroorotate dehydrogenase (quinone), found in Helicobacter pylori (strain G27).